The sequence spans 213 residues: T-cell surface glycoprotein CD8 beta chain (213 aa).

Residues 1 to 21 form the signal peptide; it reads MQPWLWLVFSMKLAALWSSSA. In terms of domain architecture, Ig-like V-type spans 22 to 133; it reads LIQTPSSLLV…KMVFGTGTKL (112 aa). Over 22-175 the chain is Extracellular; that stretch reads LIQTPSSLLV…QKGLTCSLTT (154 aa). An N-linked (GlcNAc...) asparagine glycan is attached at Asn34. Cys41 and Cys117 are joined by a disulfide. A helical membrane pass occupies residues 176–196; it reads LSLLVVCILLLLAFLGVAVYF. The Cytoplasmic portion of the chain corresponds to 197 to 213; the sequence is YCVRRRARIHFMKQFHK.

Forms disulfide-linked heterodimers with CD8A at the cell surface. Interacts with CD3D; this interaction couples TCR-CD3 with CD8. Interacts with LCK. Palmitoylated at the cytoplasmic tail and thereby targets the heterodimer CD8A/CD8B to lipid rafts unlike CD8A homodimers.

Its subcellular location is the membrane. Functionally, integral membrane glycoprotein that plays an essential role in the immune response and serves multiple functions in responses against both external and internal offenses. In T-cells, functions primarily as a coreceptor for MHC class I molecule:peptide complex. The antigens presented by class I peptides are derived from cytosolic proteins while class II derived from extracellular proteins. Interacts simultaneously with the T-cell receptor (TCR) and the MHC class I proteins presented by antigen presenting cells (APCs). In turn, recruits the Src kinase LCK to the vicinity of the TCR-CD3 complex. A palmitoylation site in the cytoplasmic tail of CD8B chain contributes to partitioning of CD8 into the plasma membrane lipid rafts where signaling proteins are enriched. Once LCK recruited, it initiates different intracellular signaling pathways by phosphorylating various substrates ultimately leading to lymphokine production, motility, adhesion and activation of cytotoxic T-lymphocytes (CTLs). Additionally, plays a critical role in thymic selection of CD8+ T-cells. The chain is T-cell surface glycoprotein CD8 beta chain (Cd8b) from Mus musculus (Mouse).